We begin with the raw amino-acid sequence, 366 residues long: Alanine racemase (366 aa).

Residue K40 is the Proton acceptor; specific for D-alanine of the active site. K40 bears the N6-(pyridoxal phosphate)lysine mark. R136 is a substrate binding site. Y263 (proton acceptor; specific for L-alanine) is an active-site residue. M310 contacts substrate.

This sequence belongs to the alanine racemase family. Requires pyridoxal 5'-phosphate as cofactor.

The enzyme catalyses L-alanine = D-alanine. The protein operates within amino-acid biosynthesis; D-alanine biosynthesis; D-alanine from L-alanine: step 1/1. Functionally, catalyzes the interconversion of L-alanine and D-alanine. May also act on other amino acids. This is Alanine racemase (alr) from Streptococcus agalactiae serotype Ia (strain ATCC 27591 / A909 / CDC SS700).